We begin with the raw amino-acid sequence, 203 residues long: E3 ubiquitin-protein ligase rnf152-B (203 aa).

The segment at C12–R55 adopts an RING-type zinc-finger fold. The helical transmembrane segment at S167 to L187 threads the bilayer.

It belongs to the RNF152 family.

Its subcellular location is the lysosome membrane. The catalysed reaction is S-ubiquitinyl-[E2 ubiquitin-conjugating enzyme]-L-cysteine + [acceptor protein]-L-lysine = [E2 ubiquitin-conjugating enzyme]-L-cysteine + N(6)-ubiquitinyl-[acceptor protein]-L-lysine.. It functions in the pathway protein modification; protein ubiquitination. In terms of biological role, E3 ubiquitin-protein ligase that acts as a negative regulator of mTORC1 signaling by mediating ubiquitination of RagA/RRAGA and RHEB. Catalyzes 'Lys-63'-linked polyubiquitination of RagA/RRAGA in response to amino acid starvation, thereby regulating mTORC1 signaling. Also mediates monoubiquitination of RHEB, promoting its association with the TSC-TBC complex and subsequent inhibition. Also mediates 'Lys-48'-linked polyubiquitination of target proteins and their subsequent targeting to the proteasome for degradation. This is E3 ubiquitin-protein ligase rnf152-B from Xenopus laevis (African clawed frog).